A 659-amino-acid chain; its full sequence is MFSQNMLIRDGEYTKSIYTMIKEERFQEAINVLNGIPEVSTTRAGLSLLGHCYYQTQDFIEASNCYEYLVNLVPDVPEYKLYYAQSLFQAGLFEEAHKISTTLDAPQLKDKVLQLQSAIAYGNEDYSTAQSLLLQRQDTSQEATVKNDEGCLLFQANMFEDALQRYVSALQAGGFNPHIAYNAALCHYRKKENSQALNYIAEIVERGIRNHPELGVGAQAETEGGARSVGNPPALAASGLAQAFNLKAAIEYQEGNVEGSREALTDLPPRLEPELDPVTLHNMALTDPVGGGAGLRRLAFLLELGPPTCPPETFANLLLLCCKHEMYDTAADILAEHTHLTYKYLSPYMYDLLDALITAQSTPEEAEQKLGVLANNIGGRLRSLAAKVQECRSAPDQNALRVALREYEFALESYLPVAMARAWIPWRADDFQGAEREFRASAEFCSETPTWRLHAAHVLFMRGDRYKEAAAFYEPIVRQNYDDILAVSASVLANLCVAYIMTSQNEEAEELMRKVERAEERKGNANGQCLHLCIVNLVIGTLYCAKGNYEFGLSRIAHALDGGSGARLCADTWLHVKRCVLGLLTGLSKQTIVLPSIAIQETLSFLRTCEAYGLTIPSVLTGPLEETGEQPPTIGLEARKLRALLLRLMEYNNFVSNTW.

TPR repeat units follow at residues 3 to 36, 43 to 76, 143 to 176, 178 to 210, 391 to 424, 450 to 483, and 533 to 566; these read SQNM…LNGI, RAGL…VPDV, ATVK…GGFN, HIAY…GIRN, CRSA…RAWI, TWRL…NYDD, and CIVN…GSGA.

The protein belongs to the TTC30/dfy-1/fleer family.

Its subcellular location is the cell projection. It localises to the cilium. In terms of biological role, required for polyglutamylation of axonemal tubulin in sensory cilia. Plays a role in anterograde intraflagellar transport (IFT), the process by which cilia precursors are transported from the base of the cilium to the site of their incorporation at the tip. In Aedes aegypti (Yellowfever mosquito), this protein is Tetratricopeptide repeat protein 30 homolog.